The chain runs to 222 residues: Abasic site processing protein YedK (222 aa).

Residue Cys-2 is the Nucleophile of the active site. Cys-2 carries the post-translational modification Thiazolidine linkage to a ring-opened DNA abasic site. Glu-105 is an active-site residue.

The protein belongs to the SOS response-associated peptidase family.

Its activity is regulated as follows. Formation and reversal of DNA-protein cross-link depends on DNA context. Catalyzes formation of the thiazolidine linkage in presence of abasic sites in single-stranded DNA. Mediates the reversal of the thiazolidine cross-link in presence of double stranded DNA. Its function is as follows. Sensor of abasic sites in single-stranded DNA (ssDNA) required to preserve genome integrity by promoting error-free repair of abasic sites. Recognizes and binds abasic sites in ssDNA at replication forks and chemically modifies the lesion by forming a covalent cross-link with DNA: forms a stable thiazolidine linkage between a ring-opened abasic site and the alpha-amino and sulfhydryl substituents of its N-terminal catalytic cysteine residue. The DNA-protein cross-link is then reversed: able to catalyze the reversal of the thiazolidine cross-link and cycle between a cross-link and a non-cross-linked state depending on DNA context: mediates self-reversal of the thiazolidine cross-link in double stranded DNA. May act as a protease: mediates autocatalytic processing of its N-terminal methionine in order to expose the catalytic cysteine. This is Abasic site processing protein YedK from Escherichia coli (strain K12).